The chain runs to 269 residues: Putative ABC transporter ATP-binding protein PF0528 (269 aa).

An ABC transporter domain is found at I6–V237. G39–S46 provides a ligand contact to ATP.

The protein belongs to the ABC transporter superfamily.

The protein localises to the cell membrane. In terms of biological role, probably part of an ABC transporter complex. Responsible for energy coupling to the transport system. This Pyrococcus furiosus (strain ATCC 43587 / DSM 3638 / JCM 8422 / Vc1) protein is Putative ABC transporter ATP-binding protein PF0528.